The primary structure comprises 113 residues: Large ribosomal subunit protein uL22 (113 aa).

The protein belongs to the universal ribosomal protein uL22 family. In terms of assembly, part of the 50S ribosomal subunit.

Functionally, this protein binds specifically to 23S rRNA; its binding is stimulated by other ribosomal proteins, e.g. L4, L17, and L20. It is important during the early stages of 50S assembly. It makes multiple contacts with different domains of the 23S rRNA in the assembled 50S subunit and ribosome. The globular domain of the protein is located near the polypeptide exit tunnel on the outside of the subunit, while an extended beta-hairpin is found that lines the wall of the exit tunnel in the center of the 70S ribosome. The chain is Large ribosomal subunit protein uL22 from Pelotomaculum thermopropionicum (strain DSM 13744 / JCM 10971 / SI).